A 449-amino-acid polypeptide reads, in one-letter code: Exodeoxyribonuclease 7 large subunit (449 aa).

This sequence belongs to the XseA family. Heterooligomer composed of large and small subunits.

The protein resides in the cytoplasm. The catalysed reaction is Exonucleolytic cleavage in either 5'- to 3'- or 3'- to 5'-direction to yield nucleoside 5'-phosphates.. In terms of biological role, bidirectionally degrades single-stranded DNA into large acid-insoluble oligonucleotides, which are then degraded further into small acid-soluble oligonucleotides. In Salmonella newport (strain SL254), this protein is Exodeoxyribonuclease 7 large subunit.